Reading from the N-terminus, the 23-residue chain is NADP-dependent malic enzyme (23 aa).

This sequence belongs to the malic enzymes family. Homotetramer.

It carries out the reaction (S)-malate + NADP(+) = pyruvate + CO2 + NADPH. The catalysed reaction is oxaloacetate + H(+) = pyruvate + CO2. This Populus euphratica (Euphrates poplar) protein is NADP-dependent malic enzyme.